Here is a 129-residue protein sequence, read N- to C-terminus: M-zodatoxin-Lt8j (129 aa).

The signal sequence occupies residues 1 to 20 (MKYFVVALALVAAFACIAES). The propeptide occupies 21–60 (KPAESEHELAEVEEENELADLEDAVWLEHLADLSDLEEAR).

The protein belongs to the cationic peptide 06 (cytoinsectotoxin) family. As to expression, expressed by the venom gland.

The protein resides in the secreted. Insecticidal, cytolytic and antimicrobial peptide. Forms voltage-dependent, ion-permeable channels in membranes. At high concentration causes cell membrane lysis. This Lachesana tarabaevi (Spider) protein is M-zodatoxin-Lt8j (cit 1-9).